Reading from the N-terminus, the 864-residue chain is Mitochondrial 15S rRNA processing factor CCM1 (864 aa).

The N-terminal 76 residues, M1–R76, are a transit peptide targeting the mitochondrion. 2 stretches are compositionally biased toward polar residues: residues T80–A94 and N102–P112. Residues T80–S117 form a disordered region. PPR repeat units follow at residues N319–H353 and D356–P390.

The protein belongs to the CCM1 family. As to quaternary structure, binds to mitochondrial small subunit 15S rRNA.

It is found in the mitochondrion. In terms of biological role, regulates mitochondrial small subunit maturation by controlling 15S rRNA 5'-end processing. Localizes to the 5' precursor of the 15S rRNA in a position that is subsequently occupied by mS47 in the mature yeast mtSSU. Uses structure and sequence-specific RNA recognition, binding to a single-stranded region of the precursor and specifically recognizing bases -6 to -1. The exchange of Ccm1 for mS47 is coupled to the irreversible removal of precursor rRNA that is accompanied by conformational changes of the mitoribosomal proteins uS5m and mS26. These conformational changes signal completion of 5'-end rRNA processing through protection of the mature 5'-end of the 15S rRNA and stabilization of mS47. The removal of the 5' precursor together with the dissociation of Ccm1 may be catalyzed by the 5'-3' exoribonuclease Pet127. Involved in the specific removal of group I introns in mitochondrial encoded transcripts. The chain is Mitochondrial 15S rRNA processing factor CCM1 from Saccharomyces cerevisiae (strain ATCC 204508 / S288c) (Baker's yeast).